The chain runs to 76 residues: Exodeoxyribonuclease 7 small subunit (76 aa).

The protein belongs to the XseB family. As to quaternary structure, heterooligomer composed of large and small subunits.

The protein localises to the cytoplasm. It catalyses the reaction Exonucleolytic cleavage in either 5'- to 3'- or 3'- to 5'-direction to yield nucleoside 5'-phosphates.. Functionally, bidirectionally degrades single-stranded DNA into large acid-insoluble oligonucleotides, which are then degraded further into small acid-soluble oligonucleotides. The protein is Exodeoxyribonuclease 7 small subunit of Geotalea uraniireducens (strain Rf4) (Geobacter uraniireducens).